A 269-amino-acid chain; its full sequence is MEDKNSVIVFKNVSFQYQSDASFTLKDVSFNIPKGQWTSIVGHNGSGKSTIAKLMIGIEKVKSGEIFYNNQAITDDNFEKLRKDIGIVFQNPDNQFVGSIVKYDVAFGLENHAVPHDEMHRRVSEALKQVDMLERADYEPNALSGGQKQRVAIASVLALNPSVIILDEATSMLDPDARQNLLDLVRKVKSEHNITIISITHDLSEAMEADHVIVMNKGTVYKEGTATEIFDHAEELTRIGLDLPFPIKINQMLGHQTSFLTYEGLVDQL.

In terms of domain architecture, ABC transporter spans 8 to 242 (IVFKNVSFQY…AEELTRIGLD (235 aa)). Position 42-49 (42-49 (GHNGSGKS)) interacts with ATP.

The protein belongs to the ABC transporter superfamily. Energy-coupling factor EcfA family. Forms a stable energy-coupling factor (ECF) transporter complex composed of 2 membrane-embedded substrate-binding proteins (S component), 2 ATP-binding proteins (A component) and 2 transmembrane proteins (T component).

The protein localises to the cell membrane. In terms of biological role, ATP-binding (A) component of a common energy-coupling factor (ECF) ABC-transporter complex. Unlike classic ABC transporters this ECF transporter provides the energy necessary to transport a number of different substrates. The polypeptide is Energy-coupling factor transporter ATP-binding protein EcfA1 (Staphylococcus aureus (strain Mu50 / ATCC 700699)).